A 317-amino-acid polypeptide reads, in one-letter code: Transcriptional regulator LsrR (317 aa).

A DNA-binding region (H-T-H motif) is located at residues 33-56 (QSEISDRLGLTRLKVSRLLEKGHQ).

Belongs to the SorC transcriptional regulatory family.

It localises to the cytoplasm. Inactivated by phosphorylated autoinducer-2 (phospho-AI-2). Phospho-AI-2 acts by binding to LsrR, which is then unable to bind to the promoter regions, allowing the transcription of the target genes. Transcriptional regulator that represses the expression of the lsr operon in the absence of the quorum-sensing signaling molecule autoinducer 2 (AI-2). It also represses the expression of the lsrRK operon. Acts by binding directly to the lsrA and lsrR promoter regions. In the presence of phosphorylated autoinducer-2 (phospho-AI-2), LsrR is inactivated, leading to the transcription of the genes. The polypeptide is Transcriptional regulator LsrR (lsrR) (Escherichia coli O157:H7).